The sequence spans 660 residues: Threonine--tRNA ligase (660 aa).

In terms of domain architecture, TGS spans 1-49 (MPDSIVHVKKGQRFLDVIKDKNVVAVKIDSVLHDLRDVAERDVDAIPVS). A catalytic region spans residues 225–554 (DHRRIIAEMD…LLEHYAGKLP (330 aa)). 3 residues coordinate Zn(2+): cysteine 318, histidine 369, and histidine 531.

Belongs to the class-II aminoacyl-tRNA synthetase family. As to quaternary structure, homodimer. Zn(2+) is required as a cofactor.

It is found in the cytoplasm. The enzyme catalyses tRNA(Thr) + L-threonine + ATP = L-threonyl-tRNA(Thr) + AMP + diphosphate + H(+). In terms of biological role, catalyzes the attachment of threonine to tRNA(Thr) in a two-step reaction: L-threonine is first activated by ATP to form Thr-AMP and then transferred to the acceptor end of tRNA(Thr). In Thermoplasma acidophilum (strain ATCC 25905 / DSM 1728 / JCM 9062 / NBRC 15155 / AMRC-C165), this protein is Threonine--tRNA ligase.